A 156-amino-acid chain; its full sequence is Small ribosomal subunit protein uS7 (156 aa).

This sequence belongs to the universal ribosomal protein uS7 family. As to quaternary structure, part of the 30S ribosomal subunit. Contacts proteins S9 and S11.

One of the primary rRNA binding proteins, it binds directly to 16S rRNA where it nucleates assembly of the head domain of the 30S subunit. Is located at the subunit interface close to the decoding center, probably blocks exit of the E-site tRNA. This Alkaliphilus metalliredigens (strain QYMF) protein is Small ribosomal subunit protein uS7.